The primary structure comprises 403 residues: Argininosuccinate synthase (403 aa).

Residues alanine 13–serine 21 and alanine 40 contribute to the ATP site. Positions 91 and 96 each coordinate L-citrulline. Glycine 121 contributes to the ATP binding site. Residues threonine 123, asparagine 127, and aspartate 128 each coordinate L-aspartate. Asparagine 127 is a binding site for L-citrulline. Residues arginine 131, serine 180, serine 189, glutamate 265, and tyrosine 277 each contribute to the L-citrulline site.

The protein belongs to the argininosuccinate synthase family. Type 1 subfamily. In terms of assembly, homotetramer.

The protein resides in the cytoplasm. The enzyme catalyses L-citrulline + L-aspartate + ATP = 2-(N(omega)-L-arginino)succinate + AMP + diphosphate + H(+). The protein operates within amino-acid biosynthesis; L-arginine biosynthesis; L-arginine from L-ornithine and carbamoyl phosphate: step 2/3. This is Argininosuccinate synthase from Leptospira interrogans serogroup Icterohaemorrhagiae serovar copenhageni (strain Fiocruz L1-130).